Here is a 24-residue protein sequence, read N- to C-terminus: Unknown protein 3 (24 aa).

The sequence is that of Unknown protein 3 from Pseudotsuga menziesii (Douglas-fir).